An 810-amino-acid polypeptide reads, in one-letter code: Phospholipase D alpha 2 (810 aa).

A C2 domain is found at 1–126 (MEECLLHGRL…LHGEEVDRWV (126 aa)). Residue Asp187 coordinates Ca(2+). A PLD phosphodiesterase 1 domain is found at 327–365 (TMFTHHQKIVVVDSEMPSGGSRSRRIVSFVGGLDLCDGR). Catalysis depends on residues His332, Lys334, and Asp339. Residue His332 coordinates a 1,2-diacyl-sn-glycero-3-phosphate. Ca(2+) is bound by residues His371 and His405. Residues Gln521 and His661 each contribute to the a 1,2-diacyl-sn-glycero-3-phosphate site. One can recognise a PLD phosphodiesterase 2 domain in the interval 656–683 (FMIYVHTKMMIVDDEYIIIGSANINQRS). Residues His661, Lys663, and Asp668 contribute to the active site. Ca(2+) is bound at residue Glu722.

It belongs to the phospholipase D family. C2-PLD subfamily. It depends on Ca(2+) as a cofactor. As to expression, highly expressed in roots, stems and flowers, moderately in leaves, seedlings and siliques. Not detected in dry seeds.

It is found in the cytoplasm. The protein resides in the membrane. It localises to the vacuole. The protein localises to the cytoplasmic vesicle. Its subcellular location is the clathrin-coated vesicle. The catalysed reaction is a 1,2-diacyl-sn-glycero-3-phosphocholine + H2O = a 1,2-diacyl-sn-glycero-3-phosphate + choline + H(+). Hydrolyzes glycerol-phospholipids at the terminal phosphodiesteric bond to generate phosphatidic acids (PA). Plays an important role in various cellular processes, including phytohormone action and response to stress, characterized by acidification of the cell. The sequence is that of Phospholipase D alpha 2 from Arabidopsis thaliana (Mouse-ear cress).